A 259-amino-acid chain; its full sequence is Large ribosomal subunit protein uL3m (259 aa).

The transit peptide at 1–15 (MQSRFLISPTLIRTF) directs the protein to the mitochondrion. A compositionally biased stretch (polar residues) spans 176–197 (ASHGASLSHRTPGSTGQNTTPS). Residues 176–208 (ASHGASLSHRTPGSTGQNTTPSRVLPGRKMAGH) form a disordered region.

Belongs to the universal ribosomal protein uL3 family. In terms of assembly, component of the mitochondrial large ribosomal subunit (mt-LSU). Mature yeast 74S mitochondrial ribosomes consist of a small (37S) and a large (54S) subunit. The 37S small subunit contains a 15S ribosomal RNA (15S mt-rRNA) and at least 32 different proteins. The 54S large subunit contains a 21S rRNA (21S mt-rRNA) and at least 45 different proteins.

It localises to the cytoplasm. The protein resides in the mitochondrion. Functionally, component of the mitochondrial ribosome (mitoribosome), a dedicated translation machinery responsible for the synthesis of mitochondrial genome-encoded proteins, including at least some of the essential transmembrane subunits of the mitochondrial respiratory chain. The mitoribosomes are attached to the mitochondrial inner membrane and translation products are cotranslationally integrated into the membrane. The sequence is that of Large ribosomal subunit protein uL3m (mrpl9) from Schizosaccharomyces pombe (strain 972 / ATCC 24843) (Fission yeast).